The chain runs to 379 residues: MTNIRKTHPPIKIINHSFIDLPAPSNISAWWTFGSLLGLCLLIQILTGLFLAMHYTSDTMTAFSSVTHICRDVNYGWLIRYMHANGASMFFICLFLHVGRGLYYGSYTYLETWNIGVILLFAVMATAFMGYVLPWGQMSFWGATVITNLMSAIPYIGTTLVEWIWGGFSVDKATLTRFFAFHFILPFIVAALVMVHLLFLPETGSNNPSCLISDSDKIPFHPYYTIKDVLGVLLLLLLFMMLVLFSPDLLGDPDNYTPANPLNTPPHIKPEWYFLFAYAILRSIPNKLGGVLALVFSILILMLFPILHMSKQRSMMFRPLSQCLFWILVADLFTLTWIGGQPVEYPFITIGQVASILYFTIILLALPSISMLENKLLKW.

8 consecutive transmembrane segments (helical) span residues 33–53, 77–98, 113–133, 178–198, 226–246, 288–308, 320–340, and 347–367; these read FGSLLGLCLLIQILTGLFLAM, WLIRYMHANGASMFFICLFLHV, WNIGVILLFAVMATAFMGYVL, FFAFHFILPFIVAALVMVHLL, IKDVLGVLLLLLLFMMLVLFS, LGGVLALVFSILILMLFPILH, LSQCLFWILVADLFTLTWIGG, and FITIGQVASILYFTIILLALP. Heme b is bound by residues histidine 83 and histidine 97. Residues histidine 182 and histidine 196 each contribute to the heme b site.

The protein belongs to the cytochrome b family. The cytochrome bc1 complex contains 11 subunits: 3 respiratory subunits (MT-CYB, CYC1 and UQCRFS1), 2 core proteins (UQCRC1 and UQCRC2) and 6 low-molecular weight proteins (UQCRH/QCR6, UQCRB/QCR7, UQCRQ/QCR8, UQCR10/QCR9, UQCR11/QCR10 and a cleavage product of UQCRFS1). This cytochrome bc1 complex then forms a dimer. Requires heme b as cofactor.

The protein localises to the mitochondrion inner membrane. Component of the ubiquinol-cytochrome c reductase complex (complex III or cytochrome b-c1 complex) that is part of the mitochondrial respiratory chain. The b-c1 complex mediates electron transfer from ubiquinol to cytochrome c. Contributes to the generation of a proton gradient across the mitochondrial membrane that is then used for ATP synthesis. This is Cytochrome b (MT-CYB) from Sciurus niger (Eastern fox squirrel).